A 660-amino-acid chain; its full sequence is Bifunctional polymyxin resistance protein ArnA (660 aa).

The tract at residues 1-304 is formyltransferase ArnAFT; the sequence is MKTVVFAYHD…TLGLVQGSRL (304 aa). 86–88 provides a ligand contact to (6R)-10-formyltetrahydrofolate; the sequence is HLI. The active-site Proton donor; for formyltransferase activity is H104. (6R)-10-formyltetrahydrofolate is bound by residues R114 and 136–140; that span reads VKRAD. A dehydrogenase ArnADH region spans residues 314-660; the sequence is RRTRVLILGV…RTVDLTDKPS (347 aa). NAD(+)-binding positions include D347 and 368–369; that span reads DI. Residues A393, Y398, and 432–433 each bind UDP-alpha-D-glucuronate; that span reads TS. The active-site Proton acceptor; for decarboxylase activity is the E434. UDP-alpha-D-glucuronate-binding positions include R460, N492, 526–535, and Y613; that span reads KLIDGGKQKR. The active-site Proton donor; for decarboxylase activity is R619.

This sequence in the N-terminal section; belongs to the Fmt family. UDP-L-Ara4N formyltransferase subfamily. It in the C-terminal section; belongs to the NAD(P)-dependent epimerase/dehydratase family. UDP-glucuronic acid decarboxylase subfamily. Homohexamer, formed by a dimer of trimers.

It carries out the reaction UDP-alpha-D-glucuronate + NAD(+) = UDP-beta-L-threo-pentopyranos-4-ulose + CO2 + NADH. The enzyme catalyses UDP-4-amino-4-deoxy-beta-L-arabinose + (6R)-10-formyltetrahydrofolate = UDP-4-deoxy-4-formamido-beta-L-arabinose + (6S)-5,6,7,8-tetrahydrofolate + H(+). The protein operates within nucleotide-sugar biosynthesis; UDP-4-deoxy-4-formamido-beta-L-arabinose biosynthesis; UDP-4-deoxy-4-formamido-beta-L-arabinose from UDP-alpha-D-glucuronate: step 1/3. Its pathway is nucleotide-sugar biosynthesis; UDP-4-deoxy-4-formamido-beta-L-arabinose biosynthesis; UDP-4-deoxy-4-formamido-beta-L-arabinose from UDP-alpha-D-glucuronate: step 3/3. It participates in bacterial outer membrane biogenesis; lipopolysaccharide biosynthesis. In terms of biological role, bifunctional enzyme that catalyzes the oxidative decarboxylation of UDP-glucuronic acid (UDP-GlcUA) to UDP-4-keto-arabinose (UDP-Ara4O) and the addition of a formyl group to UDP-4-amino-4-deoxy-L-arabinose (UDP-L-Ara4N) to form UDP-L-4-formamido-arabinose (UDP-L-Ara4FN). The modified arabinose is attached to lipid A and is required for resistance to polymyxin and cationic antimicrobial peptides. This is Bifunctional polymyxin resistance protein ArnA from Escherichia coli O9:H4 (strain HS).